Reading from the N-terminus, the 349-residue chain is Isopentenyl-diphosphate delta-isomerase (349 aa).

12–13 (RK) serves as a coordination point for substrate. FMN contacts are provided by residues 69-71 (GMT), S99, and N128. A substrate-binding site is contributed by Q158. E159 serves as a coordination point for Mg(2+). Residues K189, S214, T219, 265 to 267 (GIR), and 286 to 287 (SG) each bind FMN.

Belongs to the IPP isomerase type 2 family. As to quaternary structure, homooctamer. Dimer of tetramers. It depends on FMN as a cofactor. NADPH is required as a cofactor. Requires Mg(2+) as cofactor.

The protein resides in the cytoplasm. The enzyme catalyses isopentenyl diphosphate = dimethylallyl diphosphate. Functionally, involved in the biosynthesis of isoprenoids. Catalyzes the 1,3-allylic rearrangement of the homoallylic substrate isopentenyl (IPP) to its allylic isomer, dimethylallyl diphosphate (DMAPP). This Latilactobacillus sakei subsp. sakei (strain 23K) (Lactobacillus sakei subsp. sakei) protein is Isopentenyl-diphosphate delta-isomerase.